A 260-amino-acid polypeptide reads, in one-letter code: UPF0246 protein BPSL1241 (260 aa).

It belongs to the UPF0246 family.

The sequence is that of UPF0246 protein BPSL1241 from Burkholderia pseudomallei (strain K96243).